Consider the following 305-residue polypeptide: UDP-3-O-acyl-N-acetylglucosamine deacetylase (305 aa).

The Zn(2+) site is built by His-78, His-235, and Asp-239. His-262 functions as the Proton donor in the catalytic mechanism.

It belongs to the LpxC family. It depends on Zn(2+) as a cofactor.

It carries out the reaction a UDP-3-O-[(3R)-3-hydroxyacyl]-N-acetyl-alpha-D-glucosamine + H2O = a UDP-3-O-[(3R)-3-hydroxyacyl]-alpha-D-glucosamine + acetate. The protein operates within glycolipid biosynthesis; lipid IV(A) biosynthesis; lipid IV(A) from (3R)-3-hydroxytetradecanoyl-[acyl-carrier-protein] and UDP-N-acetyl-alpha-D-glucosamine: step 2/6. In terms of biological role, catalyzes the hydrolysis of UDP-3-O-myristoyl-N-acetylglucosamine to form UDP-3-O-myristoylglucosamine and acetate, the committed step in lipid A biosynthesis. In Citrifermentans bemidjiense (strain ATCC BAA-1014 / DSM 16622 / JCM 12645 / Bem) (Geobacter bemidjiensis), this protein is UDP-3-O-acyl-N-acetylglucosamine deacetylase.